Consider the following 1537-residue polypeptide: Isocyanide synthase-NRPS hybrid crmA (1537 aa).

The tract at residues 1-502 (MFHKEAGISH…CVKAGYAALF (502 aa)) is isocyanide synthase domain. The segment at 351 to 391 (PSVPVSPGMSSPSAASTSSSGASMQGSAATTPETHSPPTFT) is disordered. Low complexity predominate over residues 352-381 (SVPVSPGMSSPSAASTSSSGASMQGSAATT). Residues 382-391 (PETHSPPTFT) are compositionally biased toward polar residues. The tract at residues 573-752 (EAINDPFCFL…GNLIPPREDW (180 aa)) is adenylation. The region spanning 941–1019 (SSAHSIEDNV…RLSAIIALLA (79 aa)) is the Carrier domain. An O-(pantetheine 4'-phosphoryl)serine modification is found at serine 977. The interval 1293 to 1526 (RCLKTTMFLV…LEMLVTDEEF (234 aa)) is transferase.

This sequence in the N-terminal section; belongs to the isocyanide synthase family. It in the C-terminal section; belongs to the NRP synthetase family.

It functions in the pathway secondary metabolite biosynthesis. Functionally, isocyanide synthase-NRPS hybrid; part of the crm gene cluster that mediates the biosynthesis of a yet unidentified copper-responsive metabolite. Converts valine into valine isocyanide that then contributes to two distinct biosynthetic pathways under copper-limiting conditions. Reaction of valine isocyanide with the imine intermediate of festuclavine results in formation of the amide bond in fumivaline A. In addition, valine isocyanide contributes to biosynthesis of a family of acylated sugar alcohols, the D-mannitol-derived fumicicolins. CrmA and associated products inhibit microbial growth from copper-starved A.fumigatus. This Aspergillus fumigatus (strain ATCC MYA-4609 / CBS 101355 / FGSC A1100 / Af293) (Neosartorya fumigata) protein is Isocyanide synthase-NRPS hybrid crmA.